The sequence spans 444 residues: Methylenetetrahydrofolate--tRNA-(uracil-5-)-methyltransferase TrmFO (444 aa).

9–14 (GAGMAG) is an FAD binding site.

Belongs to the MnmG family. TrmFO subfamily. It depends on FAD as a cofactor.

It is found in the cytoplasm. It catalyses the reaction uridine(54) in tRNA + (6R)-5,10-methylene-5,6,7,8-tetrahydrofolate + NADH + H(+) = 5-methyluridine(54) in tRNA + (6S)-5,6,7,8-tetrahydrofolate + NAD(+). The enzyme catalyses uridine(54) in tRNA + (6R)-5,10-methylene-5,6,7,8-tetrahydrofolate + NADPH + H(+) = 5-methyluridine(54) in tRNA + (6S)-5,6,7,8-tetrahydrofolate + NADP(+). Functionally, catalyzes the folate-dependent formation of 5-methyl-uridine at position 54 (M-5-U54) in all tRNAs. The chain is Methylenetetrahydrofolate--tRNA-(uracil-5-)-methyltransferase TrmFO from Cereibacter sphaeroides (strain ATCC 17023 / DSM 158 / JCM 6121 / CCUG 31486 / LMG 2827 / NBRC 12203 / NCIMB 8253 / ATH 2.4.1.) (Rhodobacter sphaeroides).